A 695-amino-acid polypeptide reads, in one-letter code: MAQLDTLDLVVLAVLLVGSVAYFTKGTYWAVAKDPYASTGPAMNGAAKAGKTRNIIEKMEETGKNCVIFYGSQTGTAEDYASRLAKEGSQRFGLKTMVADLEEYDYENLDQFPEDKVAFFVLATYGEGEPTDNAVEFYQFFTGDDVAFESGASADEKPLSKLKYVAFGLGNNTYEHYNAMVRQVDAAFQKLGAQRIGSAGEGDDGAGTMEEDFLAWKEPMWAALSESMDLQEREAVYEPVFCVTENESLSPEDETVYLGEPTQSHLQGTPKGPYSAHNPFIAPIAESRELFTVKDRNCLHMEISIAGSNLSYQTGDHIAVWPTNAGAEVDRFLQVFGLEGKRDSVINIKGIDVTAKVPIPTPTTYDAAVRYYMEVCAPVSRQFVATLAAFAPDEESKAEIVRLGSDKDYFHEKVTNQCFNIAQALQSITSKPFSAVPFSLLIEGITKLQPRYYSISSSSLVQKDKISITAVVESVRLPGASHMVKGVTTNYLLALKQKQNGDPSPDPHGLTYSITGPRNKYDGIHVPVHVRHSNFKLPSDPSRPIIMVGPGTGVAPFRGFIQERAALAAKGEKVGPTVLFFGCRKSDEDFLYKDEWKTYQDQLGDNLKIITAFSREGPQKVYVQHRLREHSELVSDLLKQKATFYVCGDAANMAREVNLVLGQIIAAQRGLPAEKGEEMVKHMRSSGSYQEDVWS.

Over 1–8 (MAQLDTLD) the chain is Lumenal. A helical membrane pass occupies residues 9 to 31 (LVVLAVLLVGSVAYFTKGTYWAV). Residues 32 to 695 (AKDPYASTGP…SGSYQEDVWS (664 aa)) lie on the Cytoplasmic side of the membrane. The Flavodoxin-like domain maps to 66-221 (CVIFYGSQTG…DFLAWKEPMW (156 aa)). FMN contacts are provided by residues 72 to 77 (SQTGTA), 123 to 126 (ATYG), 169 to 178 (LGNNTYEHYN), and Asp-204. One can recognise an FAD-binding FR-type domain in the interval 277–538 (HNPFIAPIAE…HVRHSNFKLP (262 aa)). Arg-296 is a binding site for NADP(+). Residues 451 to 454 (RYYS), 469 to 471 (TAV), and 486 to 489 (GVTT) contribute to the FAD site. Residues Thr-552, 614-615 (SR), 620-624 (KVYVQ), and Glu-656 contribute to the NADP(+) site. Residue Trp-694 coordinates FAD.

Belongs to the NADPH--cytochrome P450 reductase family. This sequence in the N-terminal section; belongs to the flavodoxin family. The protein in the C-terminal section; belongs to the flavoprotein pyridine nucleotide cytochrome reductase family. It depends on FAD as a cofactor. FMN serves as cofactor.

Its subcellular location is the endoplasmic reticulum membrane. The protein localises to the mitochondrion outer membrane. The protein resides in the cell membrane. It catalyses the reaction 2 oxidized [cytochrome P450] + NADPH = 2 reduced [cytochrome P450] + NADP(+) + H(+). Functionally, this enzyme is required for electron transfer from NADP to cytochrome P450 in microsomes. It can also provide electron transfer to heme oxygenase and cytochrome B5. Involved in ergosterol biosynthesis. The chain is NADPH--cytochrome P450 reductase from Aspergillus niger (strain ATCC MYA-4892 / CBS 513.88 / FGSC A1513).